The chain runs to 591 residues: Aspartate--tRNA ligase (591 aa).

Position 173 (Glu-173) interacts with L-aspartate. Residues Gln-197 to Lys-200 are aspartate. Arg-219 is an L-aspartate binding site. ATP-binding positions include Arg-219–Glu-221 and Gln-228. L-aspartate is bound at residue His-448. Glu-482 contacts ATP. Position 489 (Arg-489) interacts with L-aspartate. Gly-534–Arg-537 serves as a coordination point for ATP.

This sequence belongs to the class-II aminoacyl-tRNA synthetase family. Type 1 subfamily. As to quaternary structure, homodimer.

The protein resides in the cytoplasm. It carries out the reaction tRNA(Asp) + L-aspartate + ATP = L-aspartyl-tRNA(Asp) + AMP + diphosphate. Catalyzes the attachment of L-aspartate to tRNA(Asp) in a two-step reaction: L-aspartate is first activated by ATP to form Asp-AMP and then transferred to the acceptor end of tRNA(Asp). This Shewanella sp. (strain MR-7) protein is Aspartate--tRNA ligase.